We begin with the raw amino-acid sequence, 500 residues long: NAD(P)H-quinone oxidoreductase chain 4, chloroplastic (500 aa).

15 helical membrane-spanning segments follow: residues 4-24 (LPWLTIIVILPISAGSSIPLF), 31-51 (IIRWYTLGICLLEFLLMTYTF), 87-107 (IGPISLTSFVTTLATLAAWPV), 111-131 (PRLFYFLMLAMYSGQVGLFAS), 134-154 (ILLFFLMWELELIPVYLLISM), 167-187 (FILYTAGGSIFISMGASSMGL), 207-227 (VVLEIVFYLGFFIAHAIKLPI), 242-262 (HYSTCMLLAGIPLKMGGYGLI), 274-294 (SLFSPWLVIVGAVQIIYAALT), 305-325 (IAYSSVSHMGFVIVGIGSMAD), 330-350 (GAILQMISHGLIGAALFFLAG), 358-378 (TLFLDGIGGMAIPMSKISTMF), 386-406 (LALPGMSGFVAESMVLLGIIT), 416-436 (IVIAAIMAIGMILTPIHLLSM), and 462-482 (IFISICLFLPVIGTGTYPDLV).

Belongs to the complex I subunit 4 family.

It is found in the plastid. The protein localises to the chloroplast thylakoid membrane. It catalyses the reaction a plastoquinone + NADH + (n+1) H(+)(in) = a plastoquinol + NAD(+) + n H(+)(out). The enzyme catalyses a plastoquinone + NADPH + (n+1) H(+)(in) = a plastoquinol + NADP(+) + n H(+)(out). The protein is NAD(P)H-quinone oxidoreductase chain 4, chloroplastic of Cycas taitungensis (Prince sago).